Here is a 128-residue protein sequence, read N- to C-terminus: Large ribosomal subunit protein bL19 (128 aa).

It belongs to the bacterial ribosomal protein bL19 family.

This protein is located at the 30S-50S ribosomal subunit interface and may play a role in the structure and function of the aminoacyl-tRNA binding site. The sequence is that of Large ribosomal subunit protein bL19 from Mesoplasma florum (strain ATCC 33453 / NBRC 100688 / NCTC 11704 / L1) (Acholeplasma florum).